A 162-amino-acid polypeptide reads, in one-letter code: Ribosome-binding factor A (162 aa).

The interval 124-162 is disordered; the sequence is ARVRSGAKPAGEADPYRESGSGVEPGRDGSIGDDDQPEY.

Belongs to the RbfA family. In terms of assembly, monomer. Binds 30S ribosomal subunits, but not 50S ribosomal subunits or 70S ribosomes.

Its subcellular location is the cytoplasm. Functionally, one of several proteins that assist in the late maturation steps of the functional core of the 30S ribosomal subunit. Associates with free 30S ribosomal subunits (but not with 30S subunits that are part of 70S ribosomes or polysomes). Required for efficient processing of 16S rRNA. May interact with the 5'-terminal helix region of 16S rRNA. In Mycolicibacterium paratuberculosis (strain ATCC BAA-968 / K-10) (Mycobacterium paratuberculosis), this protein is Ribosome-binding factor A.